Here is a 266-residue protein sequence, read N- to C-terminus: Aquaporin TIP3-2 (266 aa).

The next 2 membrane-spanning stretches (helical) occupy residues 29 to 49 (AAISEFIATAIFVFAAEGSVL) and 66 to 86 (GLVAVALAHALGLAVAVAVAV). The NPA 1 motif lies at 94–96 (NPA). Transmembrane regions (helical) follow at residues 109–129 (LVRAVLYWAAQLLGAVAATLL), 153–173 (AVLLEAVMTFGFVYAYYATVV), and 180–200 (LGTIAPLAVGFLLGANVLAGG). The NPA 2 motif lies at 208–210 (NPA). Residues 228-248 (YWLGPFLGAGLAGLVYEYLLI) traverse the membrane as a helical segment.

Belongs to the MIP/aquaporin (TC 1.A.8) family. TIP (TC 1.A.8.10) subfamily.

The protein localises to the vacuole membrane. Functionally, aquaporins facilitate the transport of water and small neutral solutes across cell membranes. The polypeptide is Aquaporin TIP3-2 (TIP3-2) (Zea mays (Maize)).